Consider the following 1959-residue polypeptide: Myosin-9 (1959 aa).

One can recognise a Myosin N-terminal SH3-like domain in the interval 27-77 (AAKKLVWVPSEKSGFEAASLKEEVGDEAIVELAENGKKVKVNKDDIQKMNP). Positions 81–776 (SKVEDMAELT…VLAHLEEERD (696 aa)) constitute a Myosin motor domain. 174 to 181 (GESGAGKT) is an ATP binding site. Positions 654–676 (LAKLMATLRNTNPNFVRCIIPNH) are actin-binding. The IQ domain occupies 779-808 (ITDVIIGFQACCRGYLARKAFAKRQQQLTA). The stretch at 837-1925 (LLQVSRQEEE…LKSKLRRGDL (1089 aa)) forms a coiled coil. Disordered regions lie at residues 1118–1168 (EDLE…REQE), 1694–1717 (RAKR…SGKG), 1879–1917 (LEEA…SSLK), and 1936–1959 (KGTG…KATE). Composition is skewed to basic and acidic residues over residues 1122 to 1148 (SERA…KTEL) and 1694 to 1704 (RAKRQAQQERD). Basic and acidic residues predominate over residues 1947 to 1959 (DGKAEAGDAKATE).

Belongs to the TRAFAC class myosin-kinesin ATPase superfamily. Myosin family. In terms of assembly, myosin is a hexameric protein that consists of 2 heavy chain subunits (MHC), 2 alkali light chain subunits (MLC) and 2 regulatory light chain subunits (MLC-2). In terms of tissue distribution, expressed in fibroblasts, brain, lung, kidney, spleen, and skeletal, cardiac and smooth muscles.

The protein localises to the cytoplasm. The protein resides in the cytoskeleton. Its subcellular location is the cell cortex. It localises to the cytoplasmic vesicle. It is found in the secretory vesicle. The protein localises to the cortical granule. Functionally, cellular myosin that appears to play a role in cytokinesis, cell shape, and specialized functions such as secretion and capping. The protein is Myosin-9 (MYH9) of Gallus gallus (Chicken).